A 529-amino-acid chain; its full sequence is Arginine--tRNA ligase (529 aa).

Positions 113-123 (ANPTGPLHIGH) match the 'HIGH' region motif.

This sequence belongs to the class-I aminoacyl-tRNA synthetase family. In terms of assembly, monomer.

Its subcellular location is the cytoplasm. The enzyme catalyses tRNA(Arg) + L-arginine + ATP = L-arginyl-tRNA(Arg) + AMP + diphosphate. The sequence is that of Arginine--tRNA ligase from Aliarcobacter butzleri (strain RM4018) (Arcobacter butzleri).